Reading from the N-terminus, the 249-residue chain is Enolase-phosphatase E1 (249 aa).

Asp9 and Glu11 together coordinate Mg(2+). Substrate contacts are provided by residues 137-138 (SS) and Lys177. Asp204 provides a ligand contact to Mg(2+).

The protein belongs to the HAD-like hydrolase superfamily. MasA/MtnC family. In terms of assembly, monomer. Requires Mg(2+) as cofactor.

Its subcellular location is the cytoplasm. The protein resides in the nucleus. It carries out the reaction 5-methylsulfanyl-2,3-dioxopentyl phosphate + H2O = 1,2-dihydroxy-5-(methylsulfanyl)pent-1-en-3-one + phosphate. It functions in the pathway amino-acid biosynthesis; L-methionine biosynthesis via salvage pathway; L-methionine from S-methyl-5-thio-alpha-D-ribose 1-phosphate: step 3/6. Its pathway is amino-acid biosynthesis; L-methionine biosynthesis via salvage pathway; L-methionine from S-methyl-5-thio-alpha-D-ribose 1-phosphate: step 4/6. Functionally, bifunctional enzyme that catalyzes the enolization of 2,3-diketo-5-methylthiopentyl-1-phosphate (DK-MTP-1-P) into the intermediate 2-hydroxy-3-keto-5-methylthiopentenyl-1-phosphate (HK-MTPenyl-1-P), which is then dephosphorylated to form the acireductone 1,2-dihydroxy-3-keto-5-methylthiopentene (DHK-MTPene). The sequence is that of Enolase-phosphatase E1 from Lodderomyces elongisporus (strain ATCC 11503 / CBS 2605 / JCM 1781 / NBRC 1676 / NRRL YB-4239) (Yeast).